We begin with the raw amino-acid sequence, 181 residues long: uncharacterized protein (181 aa).

This is an uncharacterized protein from Methanocaldococcus jannaschii (strain ATCC 43067 / DSM 2661 / JAL-1 / JCM 10045 / NBRC 100440) (Methanococcus jannaschii).